A 219-amino-acid polypeptide reads, in one-letter code: Thiamine-phosphate synthase (219 aa).

Residues Gln-44–Lys-48 and Asn-79 contribute to the 4-amino-2-methyl-5-(diphosphooxymethyl)pyrimidine site. The Mg(2+) site is built by Asp-80 and Asp-99. Ser-117 is a 4-amino-2-methyl-5-(diphosphooxymethyl)pyrimidine binding site. Residue Thr-143 to Thr-145 coordinates 2-[(2R,5Z)-2-carboxy-4-methylthiazol-5(2H)-ylidene]ethyl phosphate. A 4-amino-2-methyl-5-(diphosphooxymethyl)pyrimidine-binding site is contributed by Lys-146. Residues Gly-175 and Ile-195 to Ser-196 each bind 2-[(2R,5Z)-2-carboxy-4-methylthiazol-5(2H)-ylidene]ethyl phosphate.

This sequence belongs to the thiamine-phosphate synthase family. Mg(2+) serves as cofactor.

It carries out the reaction 2-[(2R,5Z)-2-carboxy-4-methylthiazol-5(2H)-ylidene]ethyl phosphate + 4-amino-2-methyl-5-(diphosphooxymethyl)pyrimidine + 2 H(+) = thiamine phosphate + CO2 + diphosphate. It catalyses the reaction 2-(2-carboxy-4-methylthiazol-5-yl)ethyl phosphate + 4-amino-2-methyl-5-(diphosphooxymethyl)pyrimidine + 2 H(+) = thiamine phosphate + CO2 + diphosphate. The catalysed reaction is 4-methyl-5-(2-phosphooxyethyl)-thiazole + 4-amino-2-methyl-5-(diphosphooxymethyl)pyrimidine + H(+) = thiamine phosphate + diphosphate. It participates in cofactor biosynthesis; thiamine diphosphate biosynthesis; thiamine phosphate from 4-amino-2-methyl-5-diphosphomethylpyrimidine and 4-methyl-5-(2-phosphoethyl)-thiazole: step 1/1. Its function is as follows. Condenses 4-methyl-5-(beta-hydroxyethyl)thiazole monophosphate (THZ-P) and 2-methyl-4-amino-5-hydroxymethyl pyrimidine pyrophosphate (HMP-PP) to form thiamine monophosphate (TMP). This is Thiamine-phosphate synthase from Bacillus cereus (strain ZK / E33L).